The following is a 45-amino-acid chain: Photosystem II reaction center protein K (45 aa).

The propeptide occupies Met-1–Ala-8. Residues Ile-16–Ala-40 form a helical membrane-spanning segment.

It belongs to the PsbK family. PSII is composed of 1 copy each of membrane proteins PsbA, PsbB, PsbC, PsbD, PsbE, PsbF, PsbH, PsbI, PsbJ, PsbK, PsbL, PsbM, PsbT, PsbX, PsbY, PsbZ, Psb30/Ycf12, peripheral proteins PsbO, CyanoQ (PsbQ), PsbU, PsbV and a large number of cofactors. It forms dimeric complexes.

It is found in the cellular thylakoid membrane. In terms of biological role, one of the components of the core complex of photosystem II (PSII). PSII is a light-driven water:plastoquinone oxidoreductase that uses light energy to abstract electrons from H(2)O, generating O(2) and a proton gradient subsequently used for ATP formation. It consists of a core antenna complex that captures photons, and an electron transfer chain that converts photonic excitation into a charge separation. This is Photosystem II reaction center protein K from Synechocystis sp. (strain ATCC 27184 / PCC 6803 / Kazusa).